Here is a 223-residue protein sequence, read N- to C-terminus: Glycolipid transfer protein 2 (223 aa).

Aspartate 69, asparagine 73, tryptophan 116, and histidine 155 together coordinate a ganglioside GM3 (d18:1(4E)).

This sequence belongs to the GLTP family.

Transfers glycolipids in vitro. In Arabidopsis thaliana (Mouse-ear cress), this protein is Glycolipid transfer protein 2.